We begin with the raw amino-acid sequence, 270 residues long: Proteasome subunit beta (270 aa).

Positions 1 to 47 (MSNRGRLGDAFLRPGSSSFLDFLSDHAPELLPGRSAAAGNAPLAPHA) are cleaved as a propeptide — removed in mature form; by autocatalysis. T48 acts as the Nucleophile in catalysis.

Belongs to the peptidase T1B family. The 20S proteasome core is composed of 14 alpha and 14 beta subunits that assemble into four stacked heptameric rings, resulting in a barrel-shaped structure. The two inner rings, each composed of seven catalytic beta subunits, are sandwiched by two outer rings, each composed of seven alpha subunits. The catalytic chamber with the active sites is on the inside of the barrel. Has a gated structure, the ends of the cylinder being occluded by the N-termini of the alpha-subunits. Is capped by the proteasome-associated ATPase, ARC.

Its subcellular location is the cytoplasm. The enzyme catalyses Cleavage of peptide bonds with very broad specificity.. Its pathway is protein degradation; proteasomal Pup-dependent pathway. Its activity is regulated as follows. The formation of the proteasomal ATPase ARC-20S proteasome complex, likely via the docking of the C-termini of ARC into the intersubunit pockets in the alpha-rings, may trigger opening of the gate for substrate entry. Interconversion between the open-gate and close-gate conformations leads to a dynamic regulation of the 20S proteasome proteolysis activity. Functionally, component of the proteasome core, a large protease complex with broad specificity involved in protein degradation. This is Proteasome subunit beta from Xylanimonas cellulosilytica (strain DSM 15894 / JCM 12276 / CECT 5975 / KCTC 9989 / LMG 20990 / NBRC 107835 / XIL07).